Consider the following 540-residue polypeptide: Chaperonin GroEL (540 aa).

ATP is bound by residues 29–32 (TLGP), 86–90 (DGTTT), G413, 476–478 (NAA), and D492.

The protein belongs to the chaperonin (HSP60) family. Forms a cylinder of 14 subunits composed of two heptameric rings stacked back-to-back. Interacts with the co-chaperonin GroES.

The protein localises to the cytoplasm. It catalyses the reaction ATP + H2O + a folded polypeptide = ADP + phosphate + an unfolded polypeptide.. Together with its co-chaperonin GroES, plays an essential role in assisting protein folding. The GroEL-GroES system forms a nano-cage that allows encapsulation of the non-native substrate proteins and provides a physical environment optimized to promote and accelerate protein folding. This is Chaperonin GroEL from Geobacillus thermodenitrificans (strain NG80-2).